We begin with the raw amino-acid sequence, 99 residues long: Transcriptional repressor PagR (99 aa).

An HTH arsR-type domain is found at 9-99 (IEYMSLEDDA…GIIKLLNPIQ (91 aa)). A DNA-binding region (H-T-H motif) is located at residues 43–62 (NVTQIIQILKLPQSTVSQHL).

Its function is as follows. Represses the expression of the pagA and atxA genes. In Bacillus anthracis, this protein is Transcriptional repressor PagR (pagR).